Reading from the N-terminus, the 740-residue chain is Platelet endothelial cell adhesion molecule (740 aa).

The first 27 residues, 1-27 (MRLRWTQGGNMWLGVLLTLQLCSSLEG), serve as a signal peptide directing secretion. The Extracellular portion of the chain corresponds to 28 to 602 (QENSFTINSI…VRVYLAPWKK (575 aa)). Ig-like C2-type domains are found at residues 35–126 (NSIH…YKVV), 145–223 (GGVV…DSVR), and 236–315 (PKFH…SKVS). 2 N-linked (GlcNAc...) asparagine glycosylation sites follow: Asn-52 and Asn-84. 3 disulfide bridges follow: Cys-57/Cys-109, Cys-152/Cys-206, and Cys-256/Cys-304. N-linked (GlcNAc...) asparagine glycans are attached at residues Asn-284, Asn-301, Asn-320, Asn-357, Asn-372, Asn-436, Asn-456, and Asn-552. Ig-like C2-type domains follow at residues 328 to 404 (PKLK…VQIA), 425 to 494 (GQTI…KVLR), and 500 to 592 (PVEE…NILA). Disulfide bonds link Cys-347-Cys-387, Cys-432-Cys-477, and Cys-524-Cys-573. A helical membrane pass occupies residues 603-621 (GLIAVVVIAVIIAVLLLGA). The Cytoplasmic segment spans residues 622–740 (RFYFLKKSKA…SRTEGSLDGT (119 aa)). 2 consecutive short sequence motifs (ITIM motif) follow at residues 690–695 (VEYTEV) and 713–718 (TVYSEI). 2 positions are modified to phosphotyrosine; by FER: Tyr-692 and Tyr-715. The segment at 697 to 740 (VTSPEPHRGLGTKGTETVYSEIRKADPDLVENRYSRTEGSLDGT) is disordered. The interval 711-731 (TETVYSEIRKADPDLVENRYS) is membrane-bound segment which detaches upon phosphorylation. Positions 717–732 (EIRKADPDLVENRYSR) are enriched in basic and acidic residues. The may play a role in cytoprotective signaling stretch occupies residues 723 to 740 (PDLVENRYSRTEGSLDGT). Phosphoserine is present on residues Ser-731 and Ser-736.

In terms of assembly, trans-homodimer (via Ig-like C2-type 1 and Ig-like C2-type 2 domains); trans-homodimerization is required for cell-cell interaction. Forms a complex with BDKRB2 and GNAQ. Interacts with BDKRB2 and GNAQ. Interacts with PTPN11; Tyr-715 is critical for PTPN11 recruitment. Interacts with FER. Interacts with CD177; the interaction is Ca(2+)-dependent; the interaction is direct. Phosphorylated on Ser and Tyr residues by src kinases after cellular activation. Upon activation, phosphorylated on Ser-731 which probably initiates the dissociation of the membrane-interaction segment (residues 711-731) from the cell membrane allowing the sequential phosphorylation of Tyr-715 and Tyr-692. Constitutively phosphorylated on Ser-736 in resting platelets. Phosphorylated on tyrosine residues by FER and FES in response to FCER1 activation. In endothelial cells Fyn mediates mechanical-force (stretch or pull) induced tyrosine phosphorylation. Post-translationally, palmitoylation by ZDHHC21 is necessary for cell surface expression in endothelial cells and enrichment in membrane rafts.

It localises to the cell membrane. The protein resides in the membrane raft. Its subcellular location is the cell junction. Functionally, cell adhesion molecule which is required for leukocyte transendothelial migration (TEM) under most inflammatory conditions. Tyr-692 plays a critical role in TEM and is required for efficient trafficking of PECAM1 to and from the lateral border recycling compartment (LBRC) and is also essential for the LBRC membrane to be targeted around migrating leukocytes. Trans-homophilic interaction may play a role in endothelial cell-cell adhesion via cell junctions. Heterophilic interaction with CD177 plays a role in transendothelial migration of neutrophils. Homophilic ligation of PECAM1 prevents macrophage-mediated phagocytosis of neighboring viable leukocytes by transmitting a detachment signal. Promotes macrophage-mediated phagocytosis of apoptotic leukocytes by tethering them to the phagocytic cells; PECAM1-mediated detachment signal appears to be disabled in apoptotic leukocytes. Modulates bradykinin receptor BDKRB2 activation. Regulates bradykinin- and hyperosmotic shock-induced ERK1/2 activation in endothelial cells. Induces susceptibility to atherosclerosis. In Sus scrofa (Pig), this protein is Platelet endothelial cell adhesion molecule (PECAM1).